Here is a 237-residue protein sequence, read N- to C-terminus: Protein GrpE (237 aa).

Disordered stretches follow at residues 24 to 56 (LILE…KQLQ) and 204 to 237 (SAGS…PQPS).

The protein belongs to the GrpE family. In terms of assembly, homodimer.

Its subcellular location is the cytoplasm. In terms of biological role, participates actively in the response to hyperosmotic and heat shock by preventing the aggregation of stress-denatured proteins, in association with DnaK and GrpE. It is the nucleotide exchange factor for DnaK and may function as a thermosensor. Unfolded proteins bind initially to DnaJ; upon interaction with the DnaJ-bound protein, DnaK hydrolyzes its bound ATP, resulting in the formation of a stable complex. GrpE releases ADP from DnaK; ATP binding to DnaK triggers the release of the substrate protein, thus completing the reaction cycle. Several rounds of ATP-dependent interactions between DnaJ, DnaK and GrpE are required for fully efficient folding. The polypeptide is Protein GrpE (Synechococcus sp. (strain JA-2-3B'a(2-13)) (Cyanobacteria bacterium Yellowstone B-Prime)).